Here is a 448-residue protein sequence, read N- to C-terminus: MAKNMAQIFPFIAVFLSCSFIFVLSSSQNSQSLYHNPQSTSSSSSKPSLLVLPIQQDASTGLHWANIHKRTPLMQVPVLLDLNGKHLWVTCSYHYSSSTYQAPFCHSTQCSRANSHHCFTCTDSATSRPGCHNNTCALMSSNPVTQEAGFGELAQDVLAIHSTHGSKLGPMVRVLQYLFSCAPSFLAQKGLPNNVQGPLGLGHAPISLQNQLFSHFGLKRQFAMCLSRYPTSNGAILFGDIYDLDNNYIHNSIDVLIDMVYTPLRISQQGEYFMQVNAIRVNKHMVVPTKNPSMLSSYHGDSRIGGAMITTTNPYTILHHSIFEVFTQVFANNMPKEAQVESVGPFGLCYDSRKLSGGIPSVEFVMDSHDDVWRISDENLMVQAQNGVSCLGFVDGGMHTRTEIVLGTHQLEENMVVFDLERSRVEFNSNSLKSHGKTCANIFDLNNA.

The first 33 residues, methionine 1 to leucine 33, serve as a signal peptide directing secretion. Positions histidine 63–asparagine 428 constitute a Peptidase A1 domain. 5 disulfides stabilise this stretch: cysteine 91-cysteine 181, cysteine 105-cysteine 118, cysteine 110-cysteine 136, cysteine 121-cysteine 131, and cysteine 349-cysteine 390. Asparagine 133 carries an N-linked (GlcNAc...) asparagine glycan.

The protein belongs to the peptidase A1 family. In terms of assembly, two-subunit monomeric unit made of alpha and beta subunits coupled by disulfide bonds (at pH 4.5 and under non-reducing conditions). Can also form oligomers including dimer, tetramer and cyclic hexamer (trimer of dimers) (at pH &gt; 5.5). Component of globulins complexes which accumulate in seeds. Interacts with flavonoids (e.g. apigenin glucosides) present in globulins complexes. In terms of processing, glycosylated on alpha chain. As to expression, expressed in developing seeds and in the young roots and cotyledons of germinating seeds and young seedlings.

It localises to the secreted. The protein localises to the extracellular space. In terms of biological role, sulfur-rich seed storage protein that remains undegraded at germination. The sequence is that of Gamma conglutin 2 from Lupinus albus (White lupine).